Reading from the N-terminus, the 319-residue chain is tRNA uridine(34) hydroxylase (319 aa).

Residues Leu124–Glu218 form the Rhodanese domain. Cys178 functions as the Cysteine persulfide intermediate in the catalytic mechanism.

It belongs to the TrhO family.

It catalyses the reaction uridine(34) in tRNA + AH2 + O2 = 5-hydroxyuridine(34) in tRNA + A + H2O. Its function is as follows. Catalyzes oxygen-dependent 5-hydroxyuridine (ho5U) modification at position 34 in tRNAs. The polypeptide is tRNA uridine(34) hydroxylase (Listeria welshimeri serovar 6b (strain ATCC 35897 / DSM 20650 / CCUG 15529 / CIP 8149 / NCTC 11857 / SLCC 5334 / V8)).